A 172-amino-acid chain; its full sequence is ATP synthase subunit b (172 aa).

Residues 27–47 traverse the membrane as a helical segment; it reads LAIVIFGLYKFLPPFIGGILE.

This sequence belongs to the ATPase B chain family. As to quaternary structure, F-type ATPases have 2 components, F(1) - the catalytic core - and F(0) - the membrane proton channel. F(1) has five subunits: alpha(3), beta(3), gamma(1), delta(1), epsilon(1). F(0) has four main subunits: a(1), b(1), b'(1) and c(10-14). The alpha and beta chains form an alternating ring which encloses part of the gamma chain. F(1) is attached to F(0) by a central stalk formed by the gamma and epsilon chains, while a peripheral stalk is formed by the delta, b and b' chains.

It is found in the cellular thylakoid membrane. Its function is as follows. F(1)F(0) ATP synthase produces ATP from ADP in the presence of a proton or sodium gradient. F-type ATPases consist of two structural domains, F(1) containing the extramembraneous catalytic core and F(0) containing the membrane proton channel, linked together by a central stalk and a peripheral stalk. During catalysis, ATP synthesis in the catalytic domain of F(1) is coupled via a rotary mechanism of the central stalk subunits to proton translocation. Functionally, component of the F(0) channel, it forms part of the peripheral stalk, linking F(1) to F(0). This is ATP synthase subunit b from Prochlorococcus marinus (strain MIT 9313).